The sequence spans 170 residues: MDFKDKKDDGILEKLVHINRITKVVKGGRRFGFSALVVVGNQAGKIGVAHAKAKQVPDAIKKANETARRVLIHVPLREGRTIHHDVYGKDGAGKIILRSAPKGTGIIAGGPVRAVCEVLGIKDIVAKSMGTSNPHNMIRATMKALSKQNSPKHIATIRNKKISDVIEKRG.

The 64-residue stretch at 11–74 folds into the S5 DRBM domain; the sequence is ILEKLVHINR…ETARRVLIHV (64 aa).

The protein belongs to the universal ribosomal protein uS5 family. Part of the 30S ribosomal subunit. Contacts proteins S4 and S8.

In terms of biological role, with S4 and S12 plays an important role in translational accuracy. Located at the back of the 30S subunit body where it stabilizes the conformation of the head with respect to the body. This chain is Small ribosomal subunit protein uS5, found in Pelagibacter ubique (strain HTCC1062).